Here is a 250-residue protein sequence, read N- to C-terminus: Indole-3-glycerol phosphate synthase (250 aa).

It belongs to the TrpC family.

The enzyme catalyses 1-(2-carboxyphenylamino)-1-deoxy-D-ribulose 5-phosphate + H(+) = (1S,2R)-1-C-(indol-3-yl)glycerol 3-phosphate + CO2 + H2O. The protein operates within amino-acid biosynthesis; L-tryptophan biosynthesis; L-tryptophan from chorismate: step 4/5. This Picrophilus torridus (strain ATCC 700027 / DSM 9790 / JCM 10055 / NBRC 100828 / KAW 2/3) protein is Indole-3-glycerol phosphate synthase.